The following is an 844-amino-acid chain: Proto-oncogene vav (844 aa).

The Calponin-homology (CH) domain maps to 1 to 119; it reads MELWRQCTHW…YTLSALSWTP (119 aa). Positions 193–372 constitute a DH domain; sequence KRCCCLREIQ…RDLAQCVNEV (180 aa). The PH domain occupies 401 to 503; it reads RPKIDGELKI…WMEQFEMAIS (103 aa). The Phorbol-ester/DAG-type zinc finger occupies 514 to 563; that stretch reads GHDFQMFSFEETTSCKACQMLLRGTFYQGYRCQRCRAPAHKECLGRVPPC. Positions 567–589 are disordered; that stretch reads GQDYSGTMKKDKPHRRAQDKKRN. One can recognise an SH3 1 domain in the interval 591–659; the sequence is LGLPKMEVCQ…PCNRVKPYVH (69 aa). Residues 670–764 form the SH2 domain; it reads WYAGPMERAG…SLDTTLQFPF (95 aa). In terms of domain architecture, SH3 2 spans 781–841; the sequence is KIFGTAKARY…PSNYVEEDYS (61 aa). Phosphotyrosine is present on residues Y825 and Y843.

In terms of assembly, interacts with SHB. Interacts with APS, DOCK2, GRB2, GRB3, DOCK2, SLA, TEC and ZNF655/VIK. Interacts with SIAH2; without leading to its degradation. Associates with BLNK, PLCG1, GRB2 and NCK1 in a B-cell antigen receptor-dependent fashion. Interacts with CBLB; which inhibits tyrosine phosphorylation and down-regulates activity. May interact with CCPG1. Interacts with CLNK. Interacts with THEMIS2. Interacts with NEK3 and this interaction is prolactin-dependent. Interacts with ITK. Interacts with PTK2B/PYK2. Interacts with HCK. Interacts with PTK2B/PYK2. Interacts (via SH2 domain) with SYK. Interacts with ANKRD54. Interacts with CD6. Interacts with LCP2; this interaction plays a role in TCR-mediated cytokine production. In terms of processing, phosphorylated by FYN. Phosphorylated on tyrosine residues by HCK in response to IFNG and bacterial lipopolysaccharide (LPS).

Its function is as follows. Couples tyrosine kinase signals with the activation of the Rho/Rac GTPases, thus leading to cell differentiation and/or proliferation. This Bos taurus (Bovine) protein is Proto-oncogene vav (VAV1).